Here is a 262-residue protein sequence, read N- to C-terminus: Small ribosomal subunit protein uS2 (262 aa).

A disordered region spans residues 225-262; sequence KQGEQLTEEAKPEDKEDEKGQAEEKEVKEENNSANKEE. The segment covering 232-262 has biased composition (basic and acidic residues); sequence EEAKPEDKEDEKGQAEEKEVKEENNSANKEE.

Belongs to the universal ribosomal protein uS2 family.

This is Small ribosomal subunit protein uS2 from Halothermothrix orenii (strain H 168 / OCM 544 / DSM 9562).